We begin with the raw amino-acid sequence, 104 residues long: COX assembly mitochondrial protein 1 (104 aa).

The CHCH domain occupies 10–52 (QKQCADLIRALEECHKSFGKFFGECNTIKYELKACLTKDRNDK). 2 short sequence motifs (cx9C motif) span residues 13–23 (CADLIRALEEC) and 34–44 (CNTIKYELKAC). Disulfide bonds link Cys-13-Cys-44 and Cys-23-Cys-34.

It belongs to the CMC family.

It is found in the mitochondrion inner membrane. Functionally, required for mitochondrial cytochrome c oxidase (COX) assembly and respiration. The protein is COX assembly mitochondrial protein 1 (cmc1) of Schizosaccharomyces pombe (strain 972 / ATCC 24843) (Fission yeast).